A 187-amino-acid chain; its full sequence is MATASRFLLRKLPRFLKLSPTLLRSNGVRVSSNLIQDSIEPLDSFWRIGSRIRHDSLTTRSFSSQGPASVDYSSVLQEEEFHKLANFTINHLLEKIEDYGDNVQIDGFDIDYGNEVLTLKLGSLGTYVLNKQTPNRQIWMSSPVSGPSRFDWDRDANAWIYRRTEAKLHKLLEEELENLCGEPIQLS.

Belongs to the frataxin family. As to quaternary structure, monomer. Oligomer. Interacts with NIFS1.

Its subcellular location is the mitochondrion. The catalysed reaction is 4 Fe(2+) + O2 + 4 H(+) = 4 Fe(3+) + 2 H2O. Functionally, promotes the biosynthesis of heme as well as the assembly and repair of iron-sulfur clusters by delivering Fe(2+) to proteins involved in these pathways. May play a role in the protection against iron-catalyzed oxidative stress through its ability to catalyze the oxidation of Fe(2+) to Fe(3+). May be able to store large amounts of the metal in the form of a ferrihydrite mineral by oligomerization. Binds to the mitochondrial cysteine desulfurase NIFS1 and increases its activity. The sequence is that of Frataxin, mitochondrial (FH) from Arabidopsis thaliana (Mouse-ear cress).